A 201-amino-acid chain; its full sequence is Guanylate kinase (201 aa).

One can recognise a Guanylate kinase-like domain in the interval 10–195 (GKIIILSGPS…CVEEVKNILK (186 aa)). ATP is bound at residue 17 to 24 (GPSGVGKG).

It belongs to the guanylate kinase family.

Its subcellular location is the cytoplasm. It carries out the reaction GMP + ATP = GDP + ADP. In terms of biological role, essential for recycling GMP and indirectly, cGMP. The polypeptide is Guanylate kinase (Mycoplasma mobile (strain ATCC 43663 / 163K / NCTC 11711) (Mesomycoplasma mobile)).